The primary structure comprises 501 residues: MNYHSFLPLRRSSLSHSTTPPSKSRNQTRYIWSIALQNTMAVEDFEAVLKAKYPGKAHAKRVVDLIRKTKPDANGVIYLEGRMTKLLEDNDSPEPFRQRRFFYYLTGCNLADCALAYDIQSSKSILFIPPIDPDDVIWSGLPLSIDEALSRYDVDEVKFTTEVNPTLTHLAKQSPNSTVFAIANQVSDNVTFIEFGSKDFETVKKAIEVSRVVKDEFEVAMIRKANHISSLAHKAVIERSKTAATEQELYATFLERCVSHAAPEMAYHPILAAGKAAATLHYVDNNAPLKGKQNLLIDAGCEWNNYASDITRTFPLTGKFTKESRDIYDIVLRMQKECTELIKGGMIWDDLHLHAHKVAIDGLLALGILKGDAKEILDARTSAAFFPHGLGHHLGMDTHDTGGNPNPNDPDKLFRYLRLRGHVPAGAVVTVEPGIYFCDFIIKPYLDDHVHSKYIDAAVLNKYWDVGGVRIEDNIHVTENGYVNLTTAIKEVSDVEAVSAK.

Residues 1 to 25 (MNYHSFLPLRRSSLSHSTTPPSKSR) form a disordered region. Positions 12 to 25 (SSLSHSTTPPSKSR) are enriched in polar residues. Mn(2+) contacts are provided by Asp-298, Asp-309, Glu-432, and Glu-472.

The protein belongs to the peptidase M24B family. Requires Mn(2+) as cofactor.

It catalyses the reaction Release of any N-terminal amino acid, including proline, that is linked to proline, even from a dipeptide or tripeptide.. Its function is as follows. Catalyzes the removal of a penultimate prolyl residue from the N-termini of peptides. The polypeptide is Probable Xaa-Pro aminopeptidase pepP (pepP) (Metarhizium acridum (strain CQMa 102)).